Consider the following 149-residue polypeptide: Transcriptional repressor NrdR (149 aa).

The segment at 3–34 (CPFCSHPETQVVETRVAEDGDFVRRRRQCGAC) is a zinc-finger region. In terms of domain architecture, ATP-cone spans 49 to 139 (PNVVKKDGRR…VYRNFEDIDE (91 aa)).

The protein belongs to the NrdR family. The cofactor is Zn(2+).

Negatively regulates transcription of bacterial ribonucleotide reductase nrd genes and operons by binding to NrdR-boxes. The sequence is that of Transcriptional repressor NrdR from Paracidovorax citrulli (strain AAC00-1) (Acidovorax citrulli).